The following is an 812-amino-acid chain: Probable inorganic carbon transporter subunit DabA (812 aa).

The Zn(2+) site is built by cysteine 337, aspartate 339, histidine 499, and cysteine 514.

Belongs to the inorganic carbon transporter (TC 9.A.2) DabA family. Forms a complex with DabB. Requires Zn(2+) as cofactor.

The protein localises to the cell inner membrane. Its function is as follows. Part of an energy-coupled inorganic carbon pump. The protein is Probable inorganic carbon transporter subunit DabA of Xanthomonas euvesicatoria pv. vesicatoria (strain 85-10) (Xanthomonas campestris pv. vesicatoria).